The primary structure comprises 113 residues: Large ribosomal subunit protein P1 (113 aa).

Residues 84–113 (APAAAAKKETKKEEVKKEESDDDMGMGLFD) form a disordered region. Residues 89 to 102 (AKKETKKEEVKKEE) show a composition bias toward basic and acidic residues.

It belongs to the eukaryotic ribosomal protein P1/P2 family. In terms of assembly, P1 and P2 exist as dimers at the large ribosomal subunit.

Functionally, plays an important role in the elongation step of protein synthesis. The chain is Large ribosomal subunit protein P1 (rplp1) from Dictyostelium discoideum (Social amoeba).